The primary structure comprises 414 residues: 2,3-diketo-5-methylthiopentyl-1-phosphate enolase (414 aa).

Lys99 functions as the Proton acceptor in the catalytic mechanism. Substrate contacts are provided by residues Lys148, 174-177, His265, Gly338, and 360-361; these read KDDE and GG. The Mg(2+) site is built by Lys174, Asp176, and Glu177. Lys174 carries the N6-carboxylysine modification.

The protein belongs to the RuBisCO large chain family. Type IV subfamily. As to quaternary structure, homodimer. Requires Mg(2+) as cofactor.

It carries out the reaction 5-methylsulfanyl-2,3-dioxopentyl phosphate = 2-hydroxy-5-methylsulfanyl-3-oxopent-1-enyl phosphate. The protein operates within amino-acid biosynthesis; L-methionine biosynthesis via salvage pathway; L-methionine from S-methyl-5-thio-alpha-D-ribose 1-phosphate: step 3/6. Catalyzes the enolization of 2,3-diketo-5-methylthiopentyl-1-phosphate (DK-MTP-1-P) into 2-hydroxy-3-keto-5-methylthiopentenyl-1-phosphate (HK-MTPenyl-1-P). In Bacillus cereus (strain G9842), this protein is 2,3-diketo-5-methylthiopentyl-1-phosphate enolase.